The chain runs to 456 residues: Bifunctional protein GlmU (456 aa).

The pyrophosphorylase stretch occupies residues 1–229; sequence MSNSSMSVVI…LSEVEGVNNR (229 aa). Residues 11–14, Lys25, Gln76, 81–82, 103–105, Gly140, Glu154, Asn169, and Asn227 contribute to the UDP-N-acetyl-alpha-D-glucosamine site; these read LAAG, GT, and YGD. Mg(2+) is bound at residue Asp105. Asn227 serves as a coordination point for Mg(2+). The segment at 230–250 is linker; sequence LQLSALERVFQTEQAEKLLLA. The N-acetyltransferase stretch occupies residues 251-456; it reads GVMLLDPSRF…QGWKRPVKKK (206 aa). UDP-N-acetyl-alpha-D-glucosamine is bound by residues Arg333 and Lys351. Residue His363 is the Proton acceptor of the active site. Residues Tyr366 and Asn377 each contribute to the UDP-N-acetyl-alpha-D-glucosamine site. Residues Ala380, 386–387, Ser405, Ala423, and Arg440 each bind acetyl-CoA; that span reads NY.

It in the N-terminal section; belongs to the N-acetylglucosamine-1-phosphate uridyltransferase family. This sequence in the C-terminal section; belongs to the transferase hexapeptide repeat family. In terms of assembly, homotrimer. Requires Mg(2+) as cofactor.

The protein localises to the cytoplasm. It catalyses the reaction alpha-D-glucosamine 1-phosphate + acetyl-CoA = N-acetyl-alpha-D-glucosamine 1-phosphate + CoA + H(+). The catalysed reaction is N-acetyl-alpha-D-glucosamine 1-phosphate + UTP + H(+) = UDP-N-acetyl-alpha-D-glucosamine + diphosphate. Its pathway is nucleotide-sugar biosynthesis; UDP-N-acetyl-alpha-D-glucosamine biosynthesis; N-acetyl-alpha-D-glucosamine 1-phosphate from alpha-D-glucosamine 6-phosphate (route II): step 2/2. It functions in the pathway nucleotide-sugar biosynthesis; UDP-N-acetyl-alpha-D-glucosamine biosynthesis; UDP-N-acetyl-alpha-D-glucosamine from N-acetyl-alpha-D-glucosamine 1-phosphate: step 1/1. It participates in bacterial outer membrane biogenesis; LPS lipid A biosynthesis. Its function is as follows. Catalyzes the last two sequential reactions in the de novo biosynthetic pathway for UDP-N-acetylglucosamine (UDP-GlcNAc). The C-terminal domain catalyzes the transfer of acetyl group from acetyl coenzyme A to glucosamine-1-phosphate (GlcN-1-P) to produce N-acetylglucosamine-1-phosphate (GlcNAc-1-P), which is converted into UDP-GlcNAc by the transfer of uridine 5-monophosphate (from uridine 5-triphosphate), a reaction catalyzed by the N-terminal domain. This is Bifunctional protein GlmU from Yersinia pseudotuberculosis serotype O:1b (strain IP 31758).